A 170-amino-acid polypeptide reads, in one-letter code: MKPERIPICLQQAVMLRLREKLQQANLRLERNYPEPALHYRQRGTAAGTAWLQSWEIRLNPVLLLENQQAFIDEVVPHELAHLLVWKHFGRVAPHGKEWKWMMESVLGLPARRTHQFAIASVRSRTFPYRCGCQQHQLSVRRHNRVVRGESEYRCLHCGTSLRPGEFQKS.

The SprT-like domain maps to 19–163 (REKLQQANLR…RCLHCGTSLR (145 aa)). Zn(2+) is bound at residue His78. Residue Glu79 is part of the active site. His82 lines the Zn(2+) pocket.

The protein belongs to the SprT family. Requires Zn(2+) as cofactor.

The protein localises to the cytoplasm. The chain is Protein SprT from Erwinia tasmaniensis (strain DSM 17950 / CFBP 7177 / CIP 109463 / NCPPB 4357 / Et1/99).